We begin with the raw amino-acid sequence, 401 residues long: 3-sulfinopropanoyl-CoA desulfinase (401 aa).

FAD contacts are provided by residues I121 to S124, S130, and Y153 to T156. Y243–N244 lines the substrate pocket. FAD-binding positions include R272, Q339, S343, G366–Q370, and Q387.

It belongs to the acyl-CoA dehydrogenase family. In terms of assembly, homotetramer. The cofactor is FAD.

It carries out the reaction 3-sulfinopropanoyl-CoA + H2O = propanoyl-CoA + sulfite + H(+). Catalyzes the conversion 3-sulfinopropanoyl-CoA (3SP-CoA) to propanoyl-CoA by abstraction of sulfite. Does not show dehydrogenase activity. Involved in the degradation of 3,3'-dithiodipropionate (DTDP), a sulfur-containing precursor substrate for biosynthesis of polythioesters (PTEs). The sequence is that of 3-sulfinopropanoyl-CoA desulfinase from Advenella mimigardefordensis (strain DSM 17166 / LMG 22922 / DPN7).